The following is a 417-amino-acid chain: Gamma-glutamyl phosphate reductase (417 aa).

This sequence belongs to the gamma-glutamyl phosphate reductase family.

The protein resides in the cytoplasm. It carries out the reaction L-glutamate 5-semialdehyde + phosphate + NADP(+) = L-glutamyl 5-phosphate + NADPH + H(+). Its pathway is amino-acid biosynthesis; L-proline biosynthesis; L-glutamate 5-semialdehyde from L-glutamate: step 2/2. Its function is as follows. Catalyzes the NADPH-dependent reduction of L-glutamate 5-phosphate into L-glutamate 5-semialdehyde and phosphate. The product spontaneously undergoes cyclization to form 1-pyrroline-5-carboxylate. In Escherichia coli O6:K15:H31 (strain 536 / UPEC), this protein is Gamma-glutamyl phosphate reductase.